A 362-amino-acid chain; its full sequence is MVHHDPIGLIAPNTGLAQLNERSRDIFRQIVESYLATGEPVGSRNISRLITMPLSPASVRNVMSDLEQLGLIYAPHTSAGRLPTEFGLRFFVDALMQVGDLTETERQSIQTQLASVGKAQSVEAALDQALTRLSGLTRAAAVVLTAKSNVRLKHIEFVRLEPEKALVVLVAEDGQVENRVLTLPSGVPASALTEASNFLNARIRGRTLAEARLELETALTQSKAELDQLTQKVIAAGIASWSGGDSDDRQLIVRGHANLLEDLHALEDLERVRLLFDDLETKRGVIDLLGRAERADGVRIFIGSENKLFSLSGSSTIIAPYNDGAGHIVGVLGVIGPTRLNYARVIPMVDYAARIVSQMLGG.

Belongs to the HrcA family.

Negative regulator of class I heat shock genes (grpE-dnaK-dnaJ and groELS operons). Prevents heat-shock induction of these operons. The protein is Heat-inducible transcription repressor HrcA of Nitrobacter hamburgensis (strain DSM 10229 / NCIMB 13809 / X14).